The chain runs to 464 residues: Glutamate--tRNA ligase (464 aa).

The short motif at 9-19 (PSPTGYLHIGG) is the 'HIGH' region element. The 'KMSKS' region motif lies at 242-246 (KISKR). Lysine 245 is an ATP binding site.

The protein belongs to the class-I aminoacyl-tRNA synthetase family. Glutamate--tRNA ligase type 1 subfamily. Monomer.

The protein resides in the cytoplasm. The enzyme catalyses tRNA(Glu) + L-glutamate + ATP = L-glutamyl-tRNA(Glu) + AMP + diphosphate. In terms of biological role, catalyzes the attachment of glutamate to tRNA(Glu) in a two-step reaction: glutamate is first activated by ATP to form Glu-AMP and then transferred to the acceptor end of tRNA(Glu). This chain is Glutamate--tRNA ligase, found in Neisseria meningitidis serogroup A / serotype 4A (strain DSM 15465 / Z2491).